The following is a 652-amino-acid chain: ATP-dependent zinc metalloprotease FtsH (652 aa).

Residues 1–11 (MKKQNNGLIKN) lie on the Cytoplasmic side of the membrane. A helical transmembrane segment spans residues 12 to 32 (PFLWLLFIFFLVTGFQYFYSG). At 33–131 (NNSGGSQQIN…EVTVKHESSS (99 aa)) the chain is on the extracellular side. The helical transmembrane segment at 132–152 (GIWINLLVSIVPFGILFFFLF) threads the bilayer. Residues 153–652 (SMMGNMGGGN…EVKSKMNDEK (500 aa)) lie on the Cytoplasmic side of the membrane. 227 to 234 (GPPGTGKT) contributes to the ATP binding site. Residue His-449 coordinates Zn(2+). Residue Glu-450 is part of the active site. Zn(2+) contacts are provided by His-453 and Asp-525. Positions 628 to 652 (MPEAVEEESHALSYDEVKSKMNDEK) are disordered. The segment covering 634-652 (EESHALSYDEVKSKMNDEK) has biased composition (basic and acidic residues).

In the central section; belongs to the AAA ATPase family. The protein in the C-terminal section; belongs to the peptidase M41 family. Homohexamer. Zn(2+) is required as a cofactor.

The protein resides in the cell membrane. Its function is as follows. Acts as a processive, ATP-dependent zinc metallopeptidase for both cytoplasmic and membrane proteins. Plays a role in the quality control of integral membrane proteins. This Streptococcus pneumoniae (strain ATCC BAA-255 / R6) protein is ATP-dependent zinc metalloprotease FtsH.